Here is a 203-residue protein sequence, read N- to C-terminus: Histone deacetylase HDT4 (203 aa).

The required to repress transcription stretch occupies residues glutamate 2–glycine 5. The tract at residues alanine 121 to lysine 203 is disordered. The segment covering asparagine 129–alanine 157 has biased composition (acidic residues). Residues glycine 180–cysteine 193 show a composition bias toward basic residues.

This sequence belongs to the histone deacetylase HD2 family. Confined to stems and flowers with young siliques.

It localises to the nucleus. It is found in the nucleolus. Functionally, probably mediates the deacetylation of lysine residues lysine residues on the N-terminal part of the core histones (H2A, H2B, H3 and H4). Histone deacetylation gives a tag for epigenetic repression and plays an important role in transcriptional regulation, cell cycle progression and developmental events. This chain is Histone deacetylase HDT4 (HDT4), found in Arabidopsis thaliana (Mouse-ear cress).